Reading from the N-terminus, the 220-residue chain is Aspartic protease inhibitor 4 (220 aa).

Residues 1–23 (MMKCLFLLCLCLLPILVFSSTFT) form the signal peptide. The propeptide occupies 24 to 32 (SQNPINLPS). The short motif at 26 to 31 (NPINLP) is the Vacuolar targeting signal element. N-linked (GlcNAc...) asparagine glycosylation occurs at asparagine 51. Disulfide bonds link cysteine 80-cysteine 125 and cysteine 174-cysteine 185.

The protein belongs to the protease inhibitor I3 (leguminous Kunitz-type inhibitor) family. Tubers.

The protein resides in the vacuole. Functionally, inhibits tightly cathepsin D (aspartic protease) and weakly trypsin (serine protease). May protect the plant by inhibiting proteases of invading organisms. This chain is Aspartic protease inhibitor 4, found in Solanum tuberosum (Potato).